Consider the following 124-residue polypeptide: Anamorsin homolog (124 aa).

The span at 1 to 20 (MSSPAPSTSHNAANSTQAFS) shows a compositional bias: polar residues. Disordered regions lie at residues 1-39 (MSSP…EDRE) and 40-124 (AKST…TDDI). Positions 49, 56, 59, and 61 each coordinate [2Fe-2S] cluster. A fe-S binding site A region spans residues 49–61 (CATRRRACKNCTC). [4Fe-4S] cluster-binding residues include cysteine 86, cysteine 89, cysteine 97, and cysteine 100. 2 short sequence motifs (cx2C motif) span residues 86–89 (CGNC) and 97–100 (CAGC). Residues 86-100 (CGNCAKGDAFRCAGC) form a fe-S binding site B region.

The protein belongs to the anamorsin family. Monomer. [2Fe-2S] cluster is required as a cofactor. It depends on [4Fe-4S] cluster as a cofactor.

The protein localises to the cytoplasm. The protein resides in the mitochondrion intermembrane space. Component of the cytosolic iron-sulfur (Fe-S) protein assembly (CIA) machinery. Required for the maturation of extramitochondrial Fe-S proteins. Part of an electron transfer chain functioning in an early step of cytosolic Fe-S biogenesis, facilitating the de novo assembly of a [4Fe-4S] cluster on the cytosolic Fe-S scaffold complex. Electrons are transferred from NADPH via a FAD- and FMN-containing diflavin oxidoreductase. Together with the diflavin oxidoreductase, also required for the assembly of the diferric tyrosyl radical cofactor of ribonucleotide reductase (RNR), probably by providing electrons for reduction during radical cofactor maturation in the catalytic small subunit. The protein is Anamorsin homolog of Trypanosoma brucei brucei (strain 927/4 GUTat10.1).